The primary structure comprises 126 residues: Glycine cleavage system H protein (126 aa).

One can recognise a Lipoyl-binding domain in the interval 23–104 (KVRVGITDFA…YDEGWMIEII (82 aa)). Lys64 is modified (N6-lipoyllysine).

It belongs to the GcvH family. In terms of assembly, the glycine cleavage system is composed of four proteins: P, T, L and H. Requires (R)-lipoate as cofactor.

Its function is as follows. The glycine cleavage system catalyzes the degradation of glycine. The H protein shuttles the methylamine group of glycine from the P protein to the T protein. The chain is Glycine cleavage system H protein from Chlorobium phaeobacteroides (strain BS1).